The chain runs to 477 residues: MKVTLSEFERAGVMVVGDVMLDRYWYGPTSRISPEAPVPVVKVNTIEERPGGAANVAMNIASLGANARLVGLTGIDDAARALSKSLADVNVKCDFVSVPTHPTITKLRVLSRNQQLIRLDFEEGFEGVDPQPLHERINQALSSIGALVLSDYAKGALASVQQMIQLARKAGVPVLIDPKGTDFERYRGATLLTPNLSEFEAVVGKCKTEEEIVERGMKLIADYELSALLVTRSEQGMSLLQPGKAPLHMPTQAQEVYDVTGAGDTVIGVLAATLAAGNSLEEACFFANAAAGVVVGKLGTSTVSPIELENAVRGRADTGFGVMTEEELKLAVAAARKRGEKVVMTNGVFDILHAGHVSYLANARKLGDRLIVAVNSDASTKRLKGDSRPVNPLEQRMIVLGALEAVDWVVSFEEDTPQRLIAGILPDLLVKGGDYKPEEIAGSKEVWANGGEVLVLNFEDGCSTTNIIKKIQQDKKG.

The tract at residues 1-318 (MKVTLSEFER…ENAVRGRADT (318 aa)) is ribokinase. Lys-179 carries the post-translational modification N6-acetyllysine. 195–198 (NLSE) provides a ligand contact to ATP. Asp-264 is a catalytic residue. The segment at 344 to 477 (MTNGVFDILH…IKKIQQDKKG (134 aa)) is cytidylyltransferase.

This sequence in the N-terminal section; belongs to the carbohydrate kinase PfkB family. In the C-terminal section; belongs to the cytidylyltransferase family. Homodimer.

It carries out the reaction D-glycero-beta-D-manno-heptose 7-phosphate + ATP = D-glycero-beta-D-manno-heptose 1,7-bisphosphate + ADP + H(+). The enzyme catalyses D-glycero-beta-D-manno-heptose 1-phosphate + ATP + H(+) = ADP-D-glycero-beta-D-manno-heptose + diphosphate. It functions in the pathway nucleotide-sugar biosynthesis; ADP-L-glycero-beta-D-manno-heptose biosynthesis; ADP-L-glycero-beta-D-manno-heptose from D-glycero-beta-D-manno-heptose 7-phosphate: step 1/4. It participates in nucleotide-sugar biosynthesis; ADP-L-glycero-beta-D-manno-heptose biosynthesis; ADP-L-glycero-beta-D-manno-heptose from D-glycero-beta-D-manno-heptose 7-phosphate: step 3/4. In terms of biological role, catalyzes the phosphorylation of D-glycero-D-manno-heptose 7-phosphate at the C-1 position to selectively form D-glycero-beta-D-manno-heptose-1,7-bisphosphate. Catalyzes the ADP transfer from ATP to D-glycero-beta-D-manno-heptose 1-phosphate, yielding ADP-D-glycero-beta-D-manno-heptose. This chain is Bifunctional protein HldE, found in Shigella boydii serotype 18 (strain CDC 3083-94 / BS512).